The primary structure comprises 277 residues: Large ribosomal subunit protein uL2 (277 aa).

Disordered regions lie at residues 35-60 (EKQS…GHKQ) and 225-277 (MNPV…ANKR). Residues 43-53 (RNNNGHITTRH) show a composition bias toward polar residues.

It belongs to the universal ribosomal protein uL2 family. Part of the 50S ribosomal subunit. Forms a bridge to the 30S subunit in the 70S ribosome.

Functionally, one of the primary rRNA binding proteins. Required for association of the 30S and 50S subunits to form the 70S ribosome, for tRNA binding and peptide bond formation. It has been suggested to have peptidyltransferase activity; this is somewhat controversial. Makes several contacts with the 16S rRNA in the 70S ribosome. The protein is Large ribosomal subunit protein uL2 of Methylobacillus flagellatus (strain ATCC 51484 / DSM 6875 / VKM B-1610 / KT).